Here is a 610-residue protein sequence, read N- to C-terminus: Phragmoplastin DRP1A (610 aa).

N-acetylmethionine is present on methionine 1. A Dynamin-type G domain is found at 31–300 (WDSLPAIAVV…LERVIKSRIP (270 aa)). The segment at 41–48 (GGQSSGKS) is G1 motif. GTP is bound at residue 44–49 (SSGKSS). The G2 motif stretch occupies residues 67–69 (VTR). The G3 motif stretch occupies residues 142–145 (DLPG). The interval 211–214 (TKID) is G4 motif. GTP is bound by residues 212-217 (KIDLMD) and 242-245 (NRSQ). The G5 motif stretch occupies residues 241-244 (VNRS). Residues 518–610 (LRRIGSNVLS…SEIDAVAWSK (93 aa)) form the GED domain.

Belongs to the TRAFAC class dynamin-like GTPase superfamily. Dynamin/Fzo/YdjA family. In terms of assembly, forms homodimer and may homooligomerize and heterooligomerize to form the phragmoplastin complex. Interacts with AGD3/VAN3. May interact with CALS1. Binds to AHK2. Binds to SH3P2. Forms a complex made of SH3P2 and DRP1A and triggers its accumulation at the cell plate. Interacts with DRP2B at the plasma membrane and in forming clathrin-coated vesicles (CCV). Binds to PHIP1. Ubiquitous. Expressed in leaves (at protein level).

It localises to the cytoplasm. The protein localises to the cytoskeleton. Its subcellular location is the phragmoplast. It is found in the cell cortex. The protein resides in the cytoplasmic vesicle. It localises to the clathrin-coated vesicle. The protein localises to the cell membrane. It catalyses the reaction GTP + H2O = GDP + phosphate + H(+). Functionally, microtubule-associated force-producing protein that is targeted to at the leading edges of the forming cell plate during cytokinesis. Also plays a major role in plasma membrane maintenance and cell wall integrity with implications in vesicular trafficking, polar cell expansion, vascular formation, and other aspects of plant growth and development, including stigmatic papillae expansion. Collaboratively with DRP2B, participates in clathrin-coated vesicle formation during endocytosis. Necessary for BOR1 polar localization in low-boron (B) conditions as well as for BOR1 endocytosis and subsequent degradation under high-concentration of boron. Has a GTPase activity. Required for the sterols-dependent dynamic high lipid order observed at the cell plate of dividing cells. Together with SH3P2, converts the fused vesicles to tubular structures at the cell plate and phragmoplasts during cytokinesis. With DRP2B and PIP5K3, required for the precise coordination of polar ARAC3/ROP6 and ARAC4/ROP2 placement and subsequent root hair positioning during planar polarity formation in root hair-forming cells, probably by mediating the correct basal-to-planar polarity switching of D6PK into the polar, lipid-enriched domain. Involved in endocytosis required for cellulose deposition during cell wall formation and elongation. Interacts with plasma membrane-mimetic liposomes and induces their clustering. This Arabidopsis thaliana (Mouse-ear cress) protein is Phragmoplastin DRP1A.